Consider the following 381-residue polypeptide: Cytochrome b (381 aa).

Transmembrane regions (helical) follow at residues 34–54, 78–99, 114–134, and 179–199; these read FGSLLGICLITPILTGVMLAM, WMIRNLHANGASFFFICIYLHI, WNTGIILLLTLMATAFVGYVL, and FFALHFLLPFLIAGISIVHLT. Heme b-binding residues include His84 and His98. The heme b site is built by His183 and His197. His202 provides a ligand contact to a ubiquinone. Helical transmembrane passes span 227 to 247, 289 to 309, 321 to 341, and 348 to 368; these read MKDLLGFTLLSLPFLALAFFT, LGGVLALAASVLILFTIPLLH, MSQILFWLLVANLFILTWVGS, and FIIIGQLASLSYFTILLFLFP.

This sequence belongs to the cytochrome b family. The cytochrome bc1 complex contains 11 subunits: 3 respiratory subunits (MT-CYB, CYC1 and UQCRFS1), 2 core proteins (UQCRC1 and UQCRC2) and 6 low-molecular weight proteins (UQCRH/QCR6, UQCRB/QCR7, UQCRQ/QCR8, UQCR10/QCR9, UQCR11/QCR10 and a cleavage product of UQCRFS1). This cytochrome bc1 complex then forms a dimer. Heme b is required as a cofactor.

Its subcellular location is the mitochondrion inner membrane. Functionally, component of the ubiquinol-cytochrome c reductase complex (complex III or cytochrome b-c1 complex) that is part of the mitochondrial respiratory chain. The b-c1 complex mediates electron transfer from ubiquinol to cytochrome c. Contributes to the generation of a proton gradient across the mitochondrial membrane that is then used for ATP synthesis. This chain is Cytochrome b (MT-CYB), found in Nothoprocta perdicaria (Chilean tinamou).